Consider the following 603-residue polypeptide: MDTKDFKRLEKMYSPRYLPGLDGLRAFAVIGIIIYHLNAQWLSGGFLGVDTFFVISGYLITSLLISEYYRTQKIDLLEFWKRRLKRLIPAVLFLICVVLTFTLIFKPELIIQMKRDAIAAIFYVSNWWYISQNVDYFNQFAIEPLKHLWSLAIEEQFYLLFPLVITFLLHRFKPRNIIQTLFIVSLISLGLMIVIHFITGDNSRVYFGTDTRLQTLLLGCILAFIWPPFALKKDISKKIVVSLDIIGISGFAVLMTLFFIVGDQDQWIYNGGFYIISFATLFIIAIAVHPSSLFAKFLSMKPLLIIGKRSYSLYLWHYPIIVFVNSYYVQGQIPVYVYIIEILLTALMAEISYRFIETPIRKKGFKAFAFLPKKKGQFARTVLVILLLVPSIVVLSGQFDALGKQHEAEKKEKKTEFKTTKKKVVKKDKQEDKQTANSKEDIKKSSPLLIGDSVMVDIGNVFTKKIPNAQIDGKVGRQLVDATPIVKSQYKDYAKKGQKVVVELGTNGAFTKDQLNELLDSFGKADIYLVSIRVPRDYEGRINKLIYEAAEKRSNVHLVDWYKASAGHPEYFAYDGIHLEYAGSKALTDLIVKTMETHATNKK.

11 consecutive transmembrane segments (helical) span residues Tyr-17–Leu-37, Gly-45–Ile-65, Leu-87–Pro-107, Leu-148–Leu-168, Ile-177–Phe-197, Thr-211–Leu-231, Ile-239–Phe-259, Ile-268–Val-288, Tyr-311–Gly-331, Ile-333–Tyr-353, and Val-382–Leu-402. Residues Ser-453, Asp-575, and His-578 contribute to the active site.

Belongs to the acyltransferase 3 family. Monomer.

The protein resides in the cell membrane. Its function is as follows. Responsible for O-acetylation at the C(6)-hydroxyl group of N-acetylmuramyl residues, forming the corresponding N,6-O-diacetylmuramic acid of the peptidoglycan. O-acetylation of the peptidoglycan is the major determinant for lysozyme resistance. In Staphylococcus aureus (strain NCTC 8325 / PS 47), this protein is O-acetyltransferase OatA.